The chain runs to 310 residues: Probable L,D-transpeptidase ErfK/SrfK (310 aa).

Residues 1–21 form the signal peptide; sequence MRRVNILCSFALLFASHTSLA. The 136-residue stretch at 96-231 folds into the L,D-TPase catalytic domain; the sequence is KGIVVNVAEM…VPVGTRVQII (136 aa). His191 functions as the Proton donor/acceptor in the catalytic mechanism. Cys207 functions as the Nucleophile in the catalytic mechanism.

Belongs to the YkuD family. As to quaternary structure, interacts with DsbG.

The protein resides in the periplasm. Its pathway is cell wall biogenesis; peptidoglycan biosynthesis. Responsible, at least in part, for anchoring of the major outer membrane lipoprotein (Lpp, also known as the Braun lipoprotein) to the peptidoglycan via a meso-diaminopimelyl-L-Lys- bond on the terminal residue of Lpp. The chain is Probable L,D-transpeptidase ErfK/SrfK (erfK) from Escherichia coli (strain K12).